The primary structure comprises 302 residues: MNSHLEDLTTEKVNDDTVNIDVMNTEDMLKAINNEDIKVAYAVQKEIHNIVKAVDIVSEKLKNNGRLFYIGAGTSGRLGVLDASECPPTYGTNPELVQGIIAGGNEAILKAVEGAEDDEDMGRSIIKERNMTSKDVVIGITASGRTPFVIGAMKEARKNEIIAIGISNNKNSLINKNVDIKITPIVGPEVIMGSTRMKAGTAQKLVLNMITTAVMIKLGKVYGNLMIDLSLSNKKLIDRAVRIIEHATKVEKEKAMEYLKRANLKPKVAIVMIKTNTKSYEAERLLNMADGFVTKAIKLGSK.

The SIS domain occupies 57–220; the sequence is VSEKLKNNGR…TTAVMIKLGK (164 aa). Glutamate 85 acts as the Proton donor in catalysis. The active site involves glutamate 116.

The protein belongs to the GCKR-like family. MurNAc-6-P etherase subfamily. As to quaternary structure, homodimer.

It catalyses the reaction N-acetyl-D-muramate 6-phosphate + H2O = N-acetyl-D-glucosamine 6-phosphate + (R)-lactate. It participates in amino-sugar metabolism; N-acetylmuramate degradation. Its function is as follows. Specifically catalyzes the cleavage of the D-lactyl ether substituent of MurNAc 6-phosphate, producing GlcNAc 6-phosphate and D-lactate. This is N-acetylmuramic acid 6-phosphate etherase from Clostridium acetobutylicum (strain ATCC 824 / DSM 792 / JCM 1419 / IAM 19013 / LMG 5710 / NBRC 13948 / NRRL B-527 / VKM B-1787 / 2291 / W).